Consider the following 69-residue polypeptide: A-kinase anchor protein inhibitor 1 (69 aa).

Positions 39–69 (QESLRREGRPGDSRAWGQLGGCELTKKHEKK) are disordered. A compositionally biased stretch (basic and acidic residues) spans 41 to 50 (SLRREGRPGD).

As to quaternary structure, binds cAMP-dependent protein kinase (PKA). Interacts specifically with RII-regulatory subunits of PKA (PRKAR2A and PRKAR2B). In terms of tissue distribution, preferentially expressed in the neural tissues.

Protein kinase A (PKA)-binding protein. Binds to type II regulatory subunits of protein kinase A (PKA) and may block the A-kinase anchoring protein (AKAP)-mediated subcellular localization of PKA. The polypeptide is A-kinase anchor protein inhibitor 1 (Mus musculus (Mouse)).